The sequence spans 1401 residues: Lysine-specific demethylase 6A (1401 aa).

The interaction with SUPT6H stretch occupies residues 1 to 1095; the sequence is MKSCGVSLAT…TNIDLSDDKK (1095 aa). TPR repeat units lie at residues 95 to 128, 132 to 165, 169 to 203, 207 to 240, 245 to 285, 286 to 319, 321 to 353, and 355 to 387; these read SDFF…QSDY, AAFL…DPSF, KEIH…NPCT, AEIQ…ENLS, ATIL…DPNS, GQSW…SEAS, DTWC…DHGH, and AAWM…KNCS. Positions 439–453 are enriched in polar residues; that stretch reads AMNTAQQNTSDNWSG. Residues 439–463 form a disordered region; sequence AMNTAQQNTSDNWSGGNAPPPVEQQ. 2 positions are modified to omega-N-methylarginine: arginine 519 and arginine 549. 3 stretches are compositionally biased toward polar residues: residues 596–606, 619–642, and 660–743; these read NHVTGSGSNGN, HNRT…STQG, and LSST…STAS. Positions 596–745 are disordered; the sequence is NHVTGSGSNG…ETPNSTASVE (150 aa). At serine 769 the chain carries Phosphoserine. 3 disordered regions span residues 795–863, 914–941, and 1043–1080; these read GTCD…EESQ, LLDK…PPTP, and FQES…GPFK. Positions 814 to 833 are enriched in low complexity; the sequence is SVASSPSSAISTATPSPKST. Phosphothreonine is present on threonine 827. Residue serine 829 is modified to Phosphoserine. Positions 834–848 are enriched in polar residues; that stretch reads EQTTTNSVTSLNSPH. Positions 918–931 are enriched in pro residues; that stretch reads CPPPRPPSSPYPPL. Basic and acidic residues predominate over residues 1046–1063; the sequence is SLREENEKRSHHKDHSDS. Residues 1095-1258 form the JmjC domain; the sequence is KWKLQLHELT…YKLAVERYEW (164 aa). Fe cation-binding residues include histidine 1146, glutamate 1148, and histidine 1226. Zn(2+) contacts are provided by cysteine 1331, cysteine 1334, cysteine 1358, and cysteine 1361.

Belongs to the UTX family. In terms of assembly, component of the MLL2/3 complex (also named ASCOM complex), at least composed of KMT2D/MLL2 or KMT2C/MLL3, ASH2L, RBBP5, WDR5, NCOA6, DPY30, KDM6A (or KDM6B), PAXIP1/PTIP, PAGR1 and alpha- and beta-tubulin. Interacts with TLE1. Interacts with SUPT6H. Interacts with SMARCA4. Interacts with PROSER1. L-ascorbate is required as a cofactor. Requires Fe(2+) as cofactor. As to expression, expressed in brain, heart and spleen.

Its subcellular location is the nucleus. It catalyses the reaction N(6),N(6),N(6)-trimethyl-L-lysyl(27)-[histone H3] + 2 2-oxoglutarate + 2 O2 = N(6)-methyl-L-lysyl(27)-[histone H3] + 2 formaldehyde + 2 succinate + 2 CO2. Functionally, histone demethylase that specifically demethylates 'Lys-27' of histone H3, thereby playing a central role in histone code. Demethylates trimethylated and dimethylated but not monomethylated H3 'Lys-27'. Plays a central role in regulation of posterior development, by regulating HOX gene expression. Demethylation of 'Lys-27' of histone H3 is concomitant with methylation of 'Lys-4' of histone H3, and regulates the recruitment of the PRC1 complex and monoubiquitination of histone H2A. Plays a demethylase-independent role in chromatin remodeling to regulate T-box family member-dependent gene expression. In Mus musculus (Mouse), this protein is Lysine-specific demethylase 6A (Kdm6a).